We begin with the raw amino-acid sequence, 126 residues long: Integrin alpha-M (126 aa).

N-linked (GlcNAc...) asparagine glycosylation is found at Asn25, Asn78, and Asn106.

It belongs to the integrin alpha chain family. In terms of assembly, heterodimer of an alpha and a beta chain. ITGAM associates with ITGB2. Found in a complex with CD177 and ITGB2/CD18. Interacts with JAM3. Interacts with THBD. Interacts with TMEM268; this interaction inhibits ITGAM degradation via the endosome-lysosome pathway.

The protein localises to the cell membrane. Its subcellular location is the membrane raft. In terms of biological role, integrin ITGAM/ITGB2 is implicated in various adhesive interactions of monocytes, macrophages and granulocytes as well as in mediating the uptake of complement-coated particles. It is identical with CR-3, the receptor for the iC3b fragment of the third complement component. It probably recognizes the R-G-D peptide in C3b. Integrin ITGAM/ITGB2 is also a receptor for fibrinogen, factor X and ICAM1. It recognizes P1 and P2 peptides of fibrinogen gamma chain. Regulates neutrophil migration. In association with beta subunit ITGB2/CD18, required for CD177-PRTN3-mediated activation of TNF primed neutrophils. May regulate phagocytosis-induced apoptosis in extravasated neutrophils. May play a role in mast cell development. Required with TYROBP/DAP12 in microglia to control production of microglial superoxide ions which promote the neuronal apoptosis that occurs during brain development. This chain is Integrin alpha-M (ITGAM), found in Cavia porcellus (Guinea pig).